The sequence spans 476 residues: Aspartyl/glutamyl-tRNA(Asn/Gln) amidotransferase subunit B (476 aa).

This sequence belongs to the GatB/GatE family. GatB subfamily. As to quaternary structure, heterotrimer of A, B and C subunits.

It catalyses the reaction L-glutamyl-tRNA(Gln) + L-glutamine + ATP + H2O = L-glutaminyl-tRNA(Gln) + L-glutamate + ADP + phosphate + H(+). The enzyme catalyses L-aspartyl-tRNA(Asn) + L-glutamine + ATP + H2O = L-asparaginyl-tRNA(Asn) + L-glutamate + ADP + phosphate + 2 H(+). Its function is as follows. Allows the formation of correctly charged Asn-tRNA(Asn) or Gln-tRNA(Gln) through the transamidation of misacylated Asp-tRNA(Asn) or Glu-tRNA(Gln) in organisms which lack either or both of asparaginyl-tRNA or glutaminyl-tRNA synthetases. The reaction takes place in the presence of glutamine and ATP through an activated phospho-Asp-tRNA(Asn) or phospho-Glu-tRNA(Gln). The sequence is that of Aspartyl/glutamyl-tRNA(Asn/Gln) amidotransferase subunit B from Neisseria meningitidis serogroup B (strain ATCC BAA-335 / MC58).